A 190-amino-acid chain; its full sequence is Ribosome hibernation promotion factor (190 aa).

It belongs to the HPF/YfiA ribosome-associated protein family. Long HPF subfamily. As to quaternary structure, interacts with 100S ribosomes.

The protein localises to the cytoplasm. Its function is as follows. Required for dimerization of active 70S ribosomes into 100S ribosomes in stationary phase; 100S ribosomes are translationally inactive and sometimes present during exponential growth. The polypeptide is Ribosome hibernation promotion factor (Staphylococcus saprophyticus subsp. saprophyticus (strain ATCC 15305 / DSM 20229 / NCIMB 8711 / NCTC 7292 / S-41)).